A 278-amino-acid polypeptide reads, in one-letter code: Undecaprenyl-diphosphatase (278 aa).

Transmembrane regions (helical) follow at residues 3–23 (YILIGVILGIVQGISEWIPIS), 42–62 (VAYSFGLFMEIGTIAAAIIYF), 88–108 (FLVIVTIITGLMGVPLYLFVI), 112–132 (ILGLPMTVLGVVLLIDGIIIY), 152–172 (IIIVGIAQGLAALPGVSRSGI), 190–210 (LSFISLIPAALGAIGVTVLFS), 225–245 (GLLISIVVATFVSIFFINALL), and 253–273 (VVVLVIILGIIAIISGILSGI).

The protein belongs to the UppP family.

It is found in the cell membrane. The catalysed reaction is di-trans,octa-cis-undecaprenyl diphosphate + H2O = di-trans,octa-cis-undecaprenyl phosphate + phosphate + H(+). Catalyzes the dephosphorylation of undecaprenyl diphosphate (UPP). This is Undecaprenyl-diphosphatase from Saccharolobus islandicus (strain M.16.4 / Kamchatka #3) (Sulfolobus islandicus).